The chain runs to 240 residues: Phosphoribosylaminoimidazole-succinocarboxamide synthase (240 aa).

It belongs to the SAICAR synthetase family.

It catalyses the reaction 5-amino-1-(5-phospho-D-ribosyl)imidazole-4-carboxylate + L-aspartate + ATP = (2S)-2-[5-amino-1-(5-phospho-beta-D-ribosyl)imidazole-4-carboxamido]succinate + ADP + phosphate + 2 H(+). It functions in the pathway purine metabolism; IMP biosynthesis via de novo pathway; 5-amino-1-(5-phospho-D-ribosyl)imidazole-4-carboxamide from 5-amino-1-(5-phospho-D-ribosyl)imidazole-4-carboxylate: step 1/2. The sequence is that of Phosphoribosylaminoimidazole-succinocarboxamide synthase from Limosilactobacillus fermentum (strain NBRC 3956 / LMG 18251) (Lactobacillus fermentum).